The primary structure comprises 394 residues: 8-amino-7-oxononanoate synthase (394 aa).

Arginine 21 is a binding site for substrate. Residue 112-113 (GY) participates in pyridoxal 5'-phosphate binding. Residue histidine 137 coordinates substrate. Serine 183, histidine 211, and threonine 239 together coordinate pyridoxal 5'-phosphate. Lysine 242 is modified (N6-(pyridoxal phosphate)lysine). Threonine 358 provides a ligand contact to substrate.

This sequence belongs to the class-II pyridoxal-phosphate-dependent aminotransferase family. BioF subfamily. Homodimer. The cofactor is pyridoxal 5'-phosphate.

The catalysed reaction is 6-carboxyhexanoyl-[ACP] + L-alanine + H(+) = (8S)-8-amino-7-oxononanoate + holo-[ACP] + CO2. Its pathway is cofactor biosynthesis; biotin biosynthesis. Catalyzes the decarboxylative condensation of pimeloyl-[acyl-carrier protein] and L-alanine to produce 8-amino-7-oxononanoate (AON), [acyl-carrier protein], and carbon dioxide. The polypeptide is 8-amino-7-oxononanoate synthase (Burkholderia thailandensis (strain ATCC 700388 / DSM 13276 / CCUG 48851 / CIP 106301 / E264)).